The following is a 550-amino-acid chain: CTP synthase (550 aa).

Residues 1–270 (MTKYVFVTGG…DRIICEELKL (270 aa)) are amidoligase domain. Ser-13 is a CTP binding site. UTP is bound at residue Ser-13. Residues 14–19 (SLGKGI) and Asp-71 each bind ATP. Mg(2+) is bound by residues Asp-71 and Glu-144. CTP-binding positions include 151-153 (DIE), 191-196 (KTKPTQ), and Lys-227. UTP is bound by residues 191–196 (KTKPTQ) and Lys-227. Residues 295–547 (TIGMVGKYVD…VEAALANKQA (253 aa)) enclose the Glutamine amidotransferase type-1 domain. L-glutamine is bound at residue Gly-356. Catalysis depends on Cys-383, which acts as the Nucleophile; for glutamine hydrolysis. Residues 384–387 (LGMQ), Glu-407, and Arg-473 each bind L-glutamine. Active-site residues include His-520 and Glu-522.

This sequence belongs to the CTP synthase family. As to quaternary structure, homotetramer.

It carries out the reaction UTP + L-glutamine + ATP + H2O = CTP + L-glutamate + ADP + phosphate + 2 H(+). The catalysed reaction is L-glutamine + H2O = L-glutamate + NH4(+). It catalyses the reaction UTP + NH4(+) + ATP = CTP + ADP + phosphate + 2 H(+). The protein operates within pyrimidine metabolism; CTP biosynthesis via de novo pathway; CTP from UDP: step 2/2. Allosterically activated by GTP, when glutamine is the substrate; GTP has no effect on the reaction when ammonia is the substrate. The allosteric effector GTP functions by stabilizing the protein conformation that binds the tetrahedral intermediate(s) formed during glutamine hydrolysis. Inhibited by the product CTP, via allosteric rather than competitive inhibition. Its function is as follows. Catalyzes the ATP-dependent amination of UTP to CTP with either L-glutamine or ammonia as the source of nitrogen. Regulates intracellular CTP levels through interactions with the four ribonucleotide triphosphates. This is CTP synthase from Burkholderia lata (strain ATCC 17760 / DSM 23089 / LMG 22485 / NCIMB 9086 / R18194 / 383).